Consider the following 125-residue polypeptide: Major intrinsically disordered NOTCH2-binding receptor 1-like (125 aa).

N-linked (GlcNAc...) asparagine glycosylation occurs at Asn-37. A helical membrane pass occupies residues 100-120; that stretch reads FAFITLFVCAVVIIITVPIVV.

It belongs to the MINAR family. As to quaternary structure, interacts with NOTCH2. As to expression, highly expressed in the auditory hair cells.

The protein localises to the lysosome membrane. The protein resides in the endoplasmic reticulum membrane. In terms of biological role, binds cholesterol and may regulate the distribution and homeostasis of cholesterol in hair cells. May play a role in angiogenesis. The sequence is that of Major intrinsically disordered NOTCH2-binding receptor 1-like from Danio rerio (Zebrafish).